Consider the following 257-residue polypeptide: Acetylglutamate kinase (257 aa).

Residues 43 to 44 (GG), R65, and N157 contribute to the substrate site. ATP contacts are provided by residues 180–185 (DVSGIL) and 208–210 (IIT).

This sequence belongs to the acetylglutamate kinase family. ArgB subfamily. In terms of assembly, homodimer.

The protein resides in the cytoplasm. The enzyme catalyses N-acetyl-L-glutamate + ATP = N-acetyl-L-glutamyl 5-phosphate + ADP. Its pathway is amino-acid biosynthesis; L-arginine biosynthesis; N(2)-acetyl-L-ornithine from L-glutamate: step 2/4. Functionally, catalyzes the ATP-dependent phosphorylation of N-acetyl-L-glutamate. This is Acetylglutamate kinase from Pectobacterium carotovorum subsp. carotovorum (strain PC1).